The primary structure comprises 558 residues: Outer membrane transporter CdiB (558 aa).

The first 25 residues, 1–25 (MFVSSRKTGLIVCFSLIGYTASAFS), serve as a signal peptide directing secretion. Residues 34-62 (NETQQRQSEVIEQSRQQREALQQLNNIVQ) adopt a coiled-coil conformation. The POTRA domain occupies 76-151 (FTLREIRFNH…GVLQLEILEG (76 aa)).

The protein belongs to the TPS (TC 1.B.20) family.

It is found in the cell outer membrane. Its function is as follows. Probable outer membrane protein component of a toxin-immunity protein module, which functions as a cellular contact-dependent growth inhibition (CDI) system. CDI modules allow bacteria to communicate with and inhibit the growth of closely related neighboring bacteria in a contact-dependent fashion. This protein may be required for secretion and assembly of the CdiA toxin. Probable member of a two partner secretion pathway (TPS) in which it mediates the secretion of CdiA. The sequence is that of Outer membrane transporter CdiB (cdiB) from Dickeya dadantii (strain 3937) (Erwinia chrysanthemi (strain 3937)).